Here is a 124-residue protein sequence, read N- to C-terminus: Small ribosomal subunit protein uS12 (124 aa).

The residue at position 89 (Asp89) is a 3-methylthioaspartic acid.

This sequence belongs to the universal ribosomal protein uS12 family. As to quaternary structure, part of the 30S ribosomal subunit. Contacts proteins S8 and S17. May interact with IF1 in the 30S initiation complex.

With S4 and S5 plays an important role in translational accuracy. In terms of biological role, interacts with and stabilizes bases of the 16S rRNA that are involved in tRNA selection in the A site and with the mRNA backbone. Located at the interface of the 30S and 50S subunits, it traverses the body of the 30S subunit contacting proteins on the other side and probably holding the rRNA structure together. The combined cluster of proteins S8, S12 and S17 appears to hold together the shoulder and platform of the 30S subunit. The chain is Small ribosomal subunit protein uS12 from Aliivibrio fischeri (strain ATCC 700601 / ES114) (Vibrio fischeri).